We begin with the raw amino-acid sequence, 532 residues long: Ankyrin repeat-containing protein At2g01680 (532 aa).

ANK repeat units lie at residues 9 to 38, 58 to 89, 93 to 122, 127 to 156, 161 to 190, 195 to 224, and 229 to 259; these read LTHQAFFSSVRSGDLSQLQQLVDNLTGDEL, AGETAVYISAAENLEDIFRYLIRFSSLETVKI, SDMNAFHVAAKRGHLGIVKELLRLWPELCR, SNTSPLYAAAVQDHLEIVNAMLDVDPSCAM, NGKTSLHTAGRYGLLRIVKALIEKDAAIVG, KGQTALHMAVKGRSLEVVEEILQADYTILN, and KGNTALHIATRKARPQITSLLLTFTAIEVNA. Helical transmembrane passes span 354–374, 396–416, 436–456, and 467–487; these read ITVVAVLFASIAFLAIFNLPG, VFCLLNATSLFISLAVVVVQI, LMWAACACTFGAFLAIAFAVV, and ITLLGAPILVGTLASMCYFVF.

The protein resides in the membrane. The polypeptide is Ankyrin repeat-containing protein At2g01680 (Arabidopsis thaliana (Mouse-ear cress)).